The following is a 581-amino-acid chain: Proline--tRNA ligase (581 aa).

Belongs to the class-II aminoacyl-tRNA synthetase family. ProS type 1 subfamily. As to quaternary structure, homodimer.

The protein localises to the cytoplasm. It catalyses the reaction tRNA(Pro) + L-proline + ATP = L-prolyl-tRNA(Pro) + AMP + diphosphate. Its function is as follows. Catalyzes the attachment of proline to tRNA(Pro) in a two-step reaction: proline is first activated by ATP to form Pro-AMP and then transferred to the acceptor end of tRNA(Pro). As ProRS can inadvertently accommodate and process non-cognate amino acids such as alanine and cysteine, to avoid such errors it has two additional distinct editing activities against alanine. One activity is designated as 'pretransfer' editing and involves the tRNA(Pro)-independent hydrolysis of activated Ala-AMP. The other activity is designated 'posttransfer' editing and involves deacylation of mischarged Ala-tRNA(Pro). The misacylated Cys-tRNA(Pro) is not edited by ProRS. The polypeptide is Proline--tRNA ligase (Leptothrix cholodnii (strain ATCC 51168 / LMG 8142 / SP-6) (Leptothrix discophora (strain SP-6))).